A 398-amino-acid chain; its full sequence is NADH-quinone oxidoreductase subunit D (398 aa).

The protein belongs to the complex I 49 kDa subunit family. As to quaternary structure, NDH-1 is composed of 14 different subunits. Subunits NuoB, C, D, E, F, and G constitute the peripheral sector of the complex.

It localises to the cell inner membrane. It carries out the reaction a quinone + NADH + 5 H(+)(in) = a quinol + NAD(+) + 4 H(+)(out). NDH-1 shuttles electrons from NADH, via FMN and iron-sulfur (Fe-S) centers, to quinones in the respiratory chain. The immediate electron acceptor for the enzyme in this species is believed to be ubiquinone. Couples the redox reaction to proton translocation (for every two electrons transferred, four hydrogen ions are translocated across the cytoplasmic membrane), and thus conserves the redox energy in a proton gradient. The sequence is that of NADH-quinone oxidoreductase subunit D from Bradyrhizobium sp. (strain ORS 278).